We begin with the raw amino-acid sequence, 126 residues long: Fatty acid-binding protein, liver (126 aa).

The residue at position 2 (Ala2) is an N-acetylalanine. Positions 56, 57, 77, 99, and 101 each coordinate cholate.

This sequence belongs to the calycin superfamily. Fatty-acid binding protein (FABP) family.

It localises to the cytoplasm. Binds free fatty acids and their coenzyme A derivatives, bilirubin, and some other small molecules in the cytoplasm. May be involved in intracellular lipid transport. Binds 2 molecules of cholate per subunit. This Gallus gallus (Chicken) protein is Fatty acid-binding protein, liver (FABP1).